The sequence spans 519 residues: Probable DNA ligase (519 aa).

Glu211 is a binding site for ATP. Catalysis depends on Lys213, which acts as the N6-AMP-lysine intermediate. ATP contacts are provided by Arg218, Arg233, Glu262, Phe302, Arg374, and Lys380.

The protein belongs to the ATP-dependent DNA ligase family. The cofactor is Mg(2+).

The enzyme catalyses ATP + (deoxyribonucleotide)n-3'-hydroxyl + 5'-phospho-(deoxyribonucleotide)m = (deoxyribonucleotide)n+m + AMP + diphosphate.. Its function is as follows. DNA ligase that seals nicks in double-stranded DNA during DNA replication, DNA recombination and DNA repair. This is Probable DNA ligase from Anaeromyxobacter sp. (strain Fw109-5).